Reading from the N-terminus, the 387-residue chain is MTSPAPEPVSIDSVALAQALIRRPSVTPADEGAMDVLQRQLEALGFNCRRMKFGEIENLYARRGTERPNLCFAGHTDVVPVGDSAAWTQGPFEAEIQDGMLYGRGAVDMKSAIAAFVAAVSNLPRDLPGSLSFLITGDEEGVAEDGTVRVVQALAAEGEVIDHCIVGEPTSANLLGDMVKIGRRGSINAWIAVDGRQGHVAYPQRAANPIPVMVDILSRLQSRVLDEGYEGFQPSNLEVTTIDVGNTATNVIPASAKARINIRFNPAHQGKDLRAWIEQECRDAADGFSGRVEALCKIGGEAFLTQPGAFTDVIVAAVGDATGRVPELSTTGGTSDARFIRSLCPVVEFGLVGATMHAVDERVPVQEIRDLANIYQALIGRYFAAFA.

Histidine 75 lines the Zn(2+) pocket. The active site involves aspartate 77. Aspartate 108 is a binding site for Zn(2+). Glutamate 139 (proton acceptor) is an active-site residue. The Zn(2+) site is built by glutamate 140, glutamate 168, and histidine 357.

The protein belongs to the peptidase M20A family. DapE subfamily. In terms of assembly, homodimer. Requires Zn(2+) as cofactor. It depends on Co(2+) as a cofactor.

It catalyses the reaction N-succinyl-(2S,6S)-2,6-diaminopimelate + H2O = (2S,6S)-2,6-diaminopimelate + succinate. Its pathway is amino-acid biosynthesis; L-lysine biosynthesis via DAP pathway; LL-2,6-diaminopimelate from (S)-tetrahydrodipicolinate (succinylase route): step 3/3. Its function is as follows. Catalyzes the hydrolysis of N-succinyl-L,L-diaminopimelic acid (SDAP), forming succinate and LL-2,6-diaminopimelate (DAP), an intermediate involved in the bacterial biosynthesis of lysine and meso-diaminopimelic acid, an essential component of bacterial cell walls. This chain is Succinyl-diaminopimelate desuccinylase, found in Caulobacter sp. (strain K31).